A 369-amino-acid chain; its full sequence is Quinolinate synthase (369 aa).

H47 and S64 together coordinate iminosuccinate. C111 contacts [4Fe-4S] cluster. Iminosuccinate is bound by residues 142–144 (YVN) and S163. Position 231 (C231) interacts with [4Fe-4S] cluster. Iminosuccinate is bound by residues 257-259 (HPE) and T274. A [4Fe-4S] cluster-binding site is contributed by C321.

The protein belongs to the quinolinate synthase family. Type 3 subfamily. Requires [4Fe-4S] cluster as cofactor.

The protein localises to the cytoplasm. It catalyses the reaction iminosuccinate + dihydroxyacetone phosphate = quinolinate + phosphate + 2 H2O + H(+). Its pathway is cofactor biosynthesis; NAD(+) biosynthesis; quinolinate from iminoaspartate: step 1/1. In terms of biological role, catalyzes the condensation of iminoaspartate with dihydroxyacetone phosphate to form quinolinate. This is Quinolinate synthase from Bacillus licheniformis (strain ATCC 14580 / DSM 13 / JCM 2505 / CCUG 7422 / NBRC 12200 / NCIMB 9375 / NCTC 10341 / NRRL NRS-1264 / Gibson 46).